Reading from the N-terminus, the 148-residue chain is Large ribosomal subunit protein bL9 (148 aa).

This sequence belongs to the bacterial ribosomal protein bL9 family.

Functionally, binds to the 23S rRNA. This chain is Large ribosomal subunit protein bL9, found in Macrococcus caseolyticus (strain JCSC5402) (Macrococcoides caseolyticum).